The primary structure comprises 132 residues: Small ribosomal subunit protein bS6 (132 aa).

Belongs to the bacterial ribosomal protein bS6 family.

Functionally, binds together with bS18 to 16S ribosomal RNA. The chain is Small ribosomal subunit protein bS6 from Chlorobium chlorochromatii (strain CaD3).